We begin with the raw amino-acid sequence, 455 residues long: Putative O-acetyltransferase SAT14 (455 aa).

This sequence belongs to the lysine N-acyltransferase MbtK family.

Its pathway is mycotoxin biosynthesis. In terms of biological role, putative O-acetyltransferase; part of the satratoxin SC2 cluster involved in the biosynthesis of satratoxins, trichothecene mycotoxins that are associated with human food poisonings. Satratoxins are suggested to be made by products of multiple gene clusters (SC1, SC2 and SC3) that encode 21 proteins in all, including polyketide synthases, acetyltransferases, and other enzymes expected to modify the trichothecene skeleton. SC1 encodes 10 proteins, SAT1 to SAT10. The largest are SAT8, which encodes a putative polyketide synthase (PKS) with a conventional non-reducing architecture, and SAT10, a putative protein containing four ankyrin repeats and thus may be involved in protein scaffolding. The putative short-chain reductase SAT3 may assist the PKS in some capacity. SAT6 contains a secretory lipase domain and acts probably as a trichothecene esterase. SAT5 encodes a putative acetyltransferase, and so, with SAT6, may affect endogenous protection from toxicity. The probable transcription factor SAT9 may regulate the expression of the SC1 cluster. SC2 encodes proteins SAT11 to SAT16, the largest of which encodes the putative reducing PKS SAT13. SAT11 is a cytochrome P450 monooxygenase, while SAT14 and SAT16 are probable acetyltransferases. The SC2 cluster may be regulated by the transcription factor SAT15. SC3 is a small cluster that encodes 5 proteins, SAT17 to SAT21. SAT21 is a putative MFS-type transporter which may have a role in exporting secondary metabolites. The four other proteins putatively encoded in SC3 include the taurine hydroxylase-like protein SAT17, the O-methyltransferase SAT18, the acetyltransferase SAT19, and the Cys6-type zinc finger SAT20, the latter being probably involved in regulation of SC3 expression. The sequence is that of Putative O-acetyltransferase SAT14 from Stachybotrys chartarum (strain CBS 109288 / IBT 7711) (Toxic black mold).